We begin with the raw amino-acid sequence, 877 residues long: Probable sulfate permease C3H7.02 (877 aa).

A run of 13 helical transmembrane segments spans residues 133–153 (WLVYDFIAGITVGCVVVPQGM), 161–181 (LPAQYGLYSSFVGVAIYCIFA), 186–206 (VSIGPVAVMSLVTSKVIANVQ), 221–241 (LALLAGAITCGLGLLRLGFII), 243–263 (FIPVPAVAGFTTGSALNIMAG), 292–312 (LPHTKVDAAFGLVSLFILYLV), 329–349 (VFFLTNVLRSAVIIIVGTAIS), 384–404 (LCADLASELPVSVIVLLLEHI), 424–444 (LIAMGATNLIGVFFHAYPATG), 461–481 (LGGIFTAGVVVLALYCLTGAF), 484–504 (IPNAVLSAVIIHSVFDLIIPW), 518–538 (ALIFICAVFVSVFSSIENGIY), and 543–563 (LSAALLLFRIAKPSGSFLGIL). Residues 594–747 (NLTVRDPPAG…SRSIEVGSAA (154 aa)) form the STAS domain. Disordered stretches follow at residues 643 to 663 (KASDRPWNDPAPRKKKNAPEV) and 793 to 821 (ADSDTISVSDDKDKKVEGHRPSQDPTFSH). Basic and acidic residues predominate over residues 801 to 821 (SDDKDKKVEGHRPSQDPTFSH).

This sequence belongs to the SLC26A/SulP transporter (TC 2.A.53) family.

The protein resides in the membrane. High affinity uptake of sulfate into the cell. This Schizosaccharomyces pombe (strain 972 / ATCC 24843) (Fission yeast) protein is Probable sulfate permease C3H7.02.